We begin with the raw amino-acid sequence, 369 residues long: Probable serine/threonine-protein kinase FMP48 (369 aa).

The Protein kinase domain occupies 2–369 (YTKLRSIQSG…EKPCLIQDGK (368 aa)). ATP contacts are provided by residues 8–16 (IQSGTFSTV) and lysine 31. The active-site Proton acceptor is aspartate 133.

The protein belongs to the protein kinase superfamily. Ser/Thr protein kinase family.

It localises to the mitochondrion. It catalyses the reaction L-seryl-[protein] + ATP = O-phospho-L-seryl-[protein] + ADP + H(+). It carries out the reaction L-threonyl-[protein] + ATP = O-phospho-L-threonyl-[protein] + ADP + H(+). The sequence is that of Probable serine/threonine-protein kinase FMP48 (FMP48) from Saccharomyces cerevisiae (strain ATCC 204508 / S288c) (Baker's yeast).